The sequence spans 363 residues: Serpentine receptor class beta-18 (363 aa).

7 helical membrane-spanning segments follow: residues 52–72 (LAQF…VVYI), 92–112 (MLLF…YHII), 135–155 (FRYT…CIYI), 172–192 (LILA…IIWV), 218–238 (KATI…IGLF), 276–296 (AALM…YNFL), and 303–323 (TIAT…LVIV).

The protein belongs to the nematode receptor-like protein srb family.

Its subcellular location is the membrane. This Caenorhabditis elegans protein is Serpentine receptor class beta-18 (srb-18).